Consider the following 446-residue polypeptide: Tol-Pal system protein TolB (446 aa).

The first 19 residues, 1–19, serve as a signal peptide directing secretion; it reads MLLRYLFILFIIIPIKAFA.

It belongs to the TolB family. The Tol-Pal system is composed of five core proteins: the inner membrane proteins TolA, TolQ and TolR, the periplasmic protein TolB and the outer membrane protein Pal. They form a network linking the inner and outer membranes and the peptidoglycan layer.

The protein resides in the periplasm. Its function is as follows. Part of the Tol-Pal system, which plays a role in outer membrane invagination during cell division and is important for maintaining outer membrane integrity. The protein is Tol-Pal system protein TolB of Pelagibacter ubique (strain HTCC1062).